Reading from the N-terminus, the 488-residue chain is MKLTKLLTYLKNVPSYAGQEDPDITSIEMDSREVKTGSLFVCIKGYTVDGHDYARQAAEKGAAAIVAEREVDADVPVIIIRHTKRALAVLSDAFYGQPTKQLRLIGITGTNGKTSTSHMVEEIFRKAGSRTGLIGTMYTKIHDETFEAKNTTPESVTLQKTFRKMVDQGVDTAVMEVSSHALHMGRVHGCDYDIAAFTNLTQDHLDYHETMEEYKHAKSLLFSQLGGSFNHETPKWAVLNADDPASAYFAQVTSAHLLTYGIQNDADVMAENIKMAPKGTTFDLVTPKGSAQVTIPLVGLFNVYNVLTAAAIAIAADIPFATITEGIEGLKGVRGRFELVDAGQDFPVIVDYAHTPDSLENVLNTCRGLTEGKLFVVVGCGGDRDKTKRPKMAKIAVDLADEPVFTADNPRSENPLAILNDMEEGVKGAYYHSIVNREQAIFFAIANAKKGDVVLIAGKGHETYQQIGGQTFDFDDAEVAKRAILELK.

S31 provides a ligand contact to UDP-N-acetyl-alpha-D-muramoyl-L-alanyl-D-glutamate. ATP is bound at residue 109 to 115 (GTNGKTS). Residues N150, 151-152 (TT), S178, and R186 contribute to the UDP-N-acetyl-alpha-D-muramoyl-L-alanyl-D-glutamate site. K218 is modified (N6-carboxylysine). Residues R384, 408 to 411 (DNPR), G458, and E462 contribute to the meso-2,6-diaminopimelate site. The Meso-diaminopimelate recognition motif motif lies at 408-411 (DNPR).

The protein belongs to the MurCDEF family. MurE subfamily. The cofactor is Mg(2+). Post-translationally, carboxylation is probably crucial for Mg(2+) binding and, consequently, for the gamma-phosphate positioning of ATP.

Its subcellular location is the cytoplasm. It catalyses the reaction UDP-N-acetyl-alpha-D-muramoyl-L-alanyl-D-glutamate + meso-2,6-diaminopimelate + ATP = UDP-N-acetyl-alpha-D-muramoyl-L-alanyl-gamma-D-glutamyl-meso-2,6-diaminopimelate + ADP + phosphate + H(+). The protein operates within cell wall biogenesis; peptidoglycan biosynthesis. In terms of biological role, catalyzes the addition of meso-diaminopimelic acid to the nucleotide precursor UDP-N-acetylmuramoyl-L-alanyl-D-glutamate (UMAG) in the biosynthesis of bacterial cell-wall peptidoglycan. The sequence is that of UDP-N-acetylmuramoyl-L-alanyl-D-glutamate--2,6-diaminopimelate ligase from Bacillus licheniformis (strain ATCC 14580 / DSM 13 / JCM 2505 / CCUG 7422 / NBRC 12200 / NCIMB 9375 / NCTC 10341 / NRRL NRS-1264 / Gibson 46).